We begin with the raw amino-acid sequence, 161 residues long: MGKLTVCTSKPYLNFSRAIRTYLCGSKCDNAIYFTPQKIVIELVQEKKTTQLLLLLAASIALYLLSPQLGARMLFELVQARTTSVSNSSVAAALFACAGEEIINPAIFLFLHVLTLVIVLAMAAEVIYNRCRRTTRPTAPPPPVNNADFNLADALDETYNK.

2 N-linked (GlcNAc...) asparagine; by host glycosylation sites follow: asparagine 14 and asparagine 87. A helical transmembrane segment spans residues 102-129 (IINPAIFLFLHVLTLVIVLAMAAEVIYN).

It localises to the host membrane. This is Early E3 17.7 kDa glycoprotein from Murine adenovirus A serotype 1 (MAdV-1).